The primary structure comprises 298 residues: Probable pyridoxal 5'-phosphate synthase subunit SNZ3 (298 aa).

Position 21 (aspartate 21) interacts with D-ribose 5-phosphate. Residue lysine 78 is the Schiff-base intermediate with D-ribose 5-phosphate of the active site. Residues glycine 150, glycine 213, and 234-235 (GS) each bind D-ribose 5-phosphate.

This sequence belongs to the PdxS/SNZ family. As to quaternary structure, homohexamer. Interacts with THI11.

It catalyses the reaction aldehydo-D-ribose 5-phosphate + D-glyceraldehyde 3-phosphate + L-glutamine = pyridoxal 5'-phosphate + L-glutamate + phosphate + 3 H2O + H(+). The protein operates within cofactor biosynthesis; pyridoxal 5'-phosphate biosynthesis. Catalyzes the formation of pyridoxal 5'-phosphate from ribose 5-phosphate (RBP), glyceraldehyde 3-phosphate (G3P) and ammonia. The ammonia is provided by a SNO isoform. Can also use ribulose 5-phosphate and dihydroxyacetone phosphate as substrates, resulting from enzyme-catalyzed isomerization of RBP and G3P, respectively. This is Probable pyridoxal 5'-phosphate synthase subunit SNZ3 (SNZ3) from Saccharomyces cerevisiae (strain ATCC 204508 / S288c) (Baker's yeast).